Consider the following 370-residue polypeptide: Queuine tRNA-ribosyltransferase (370 aa).

D89 (proton acceptor) is an active-site residue. Residues 89 to 93, D143, Q187, and G214 contribute to the substrate site; that span reads DSGGF. The interval 245–251 is RNA binding; that stretch reads GVGKPED. Residue D264 is the Nucleophile of the active site. The interval 269 to 273 is RNA binding; important for wobble base 34 recognition; the sequence is TRNAR. Positions 302, 304, 307, and 333 each coordinate Zn(2+).

Belongs to the queuine tRNA-ribosyltransferase family. As to quaternary structure, homodimer. Within each dimer, one monomer is responsible for RNA recognition and catalysis, while the other monomer binds to the replacement base PreQ1. The cofactor is Zn(2+).

The enzyme catalyses 7-aminomethyl-7-carbaguanine + guanosine(34) in tRNA = 7-aminomethyl-7-carbaguanosine(34) in tRNA + guanine. It participates in tRNA modification; tRNA-queuosine biosynthesis. Functionally, catalyzes the base-exchange of a guanine (G) residue with the queuine precursor 7-aminomethyl-7-deazaguanine (PreQ1) at position 34 (anticodon wobble position) in tRNAs with GU(N) anticodons (tRNA-Asp, -Asn, -His and -Tyr). Catalysis occurs through a double-displacement mechanism. The nucleophile active site attacks the C1' of nucleotide 34 to detach the guanine base from the RNA, forming a covalent enzyme-RNA intermediate. The proton acceptor active site deprotonates the incoming PreQ1, allowing a nucleophilic attack on the C1' of the ribose to form the product. After dissociation, two additional enzymatic reactions on the tRNA convert PreQ1 to queuine (Q), resulting in the hypermodified nucleoside queuosine (7-(((4,5-cis-dihydroxy-2-cyclopenten-1-yl)amino)methyl)-7-deazaguanosine). This is Queuine tRNA-ribosyltransferase from Baumannia cicadellinicola subsp. Homalodisca coagulata.